Consider the following 484-residue polypeptide: MKILFVASEVTPFAKTGGLADVTAALPKTLKKLGHDVRIILPFYSEVERGGHGIRKGRKSVEAVIDGVMKKGLFRHTSLGDIPVYLIENKEYFSRDNLYGTAAGEYPDNHRRFAFFCRGVLDLLKKMDFRPDVIHCHDWQTALIPLLLRREKGEDLFFSKTGVMFTIHNLAYQGLFAKETLAEMGLDSSYFTIDCLEYYGKVNLMKGAILSADLITTVSETYCREIQTPESGNGLDGVLGVRNADLHGVLNGLDYDLWDPATDRGLYKNYSVTAPAGKAVNKKGLQKLLGLEPAADVPVIGIVSRLTAQKGFDLLAELMPKFVRSRLQLVILGTGDEKYLKLLQDIKARGAGNISVNIGFHPELAPKIYAGSDIFLMPSHYEPCGLGQMIALRYGAVPLVRKTGGLADTVFDEQDGATEPNGFSFEDYTPEALWETVSRSLQAFDDKGAWKKLMKRGMSCDYSWDASARRYEELYRLALARKGR.

K15 provides a ligand contact to ADP-alpha-D-glucose.

The protein belongs to the glycosyltransferase 1 family. Bacterial/plant glycogen synthase subfamily.

It carries out the reaction [(1-&gt;4)-alpha-D-glucosyl](n) + ADP-alpha-D-glucose = [(1-&gt;4)-alpha-D-glucosyl](n+1) + ADP + H(+). It participates in glycan biosynthesis; glycogen biosynthesis. In terms of biological role, synthesizes alpha-1,4-glucan chains using ADP-glucose. This is Glycogen synthase from Geotalea uraniireducens (strain Rf4) (Geobacter uraniireducens).